The chain runs to 192 residues: Adenylate kinase (192 aa).

Residue 10–18 (GVPGVGGTT) coordinates ATP.

It belongs to the archaeal adenylate kinase family. In terms of assembly, monomer.

The protein resides in the cytoplasm. It catalyses the reaction AMP + ATP = 2 ADP. This is Adenylate kinase from Methanococcus maripaludis (strain C5 / ATCC BAA-1333).